A 189-amino-acid chain; its full sequence is dCTP deaminase (189 aa).

DCTP is bound by residues 112-117 (KSTYAR), 136-138 (TLE), Gln-157, Tyr-171, and Gln-181. Catalysis depends on Glu-138, which acts as the Proton donor/acceptor.

Belongs to the dCTP deaminase family. As to quaternary structure, homotrimer.

It carries out the reaction dCTP + H2O + H(+) = dUTP + NH4(+). It functions in the pathway pyrimidine metabolism; dUMP biosynthesis; dUMP from dCTP (dUTP route): step 1/2. Catalyzes the deamination of dCTP to dUTP. This Halorhodospira halophila (strain DSM 244 / SL1) (Ectothiorhodospira halophila (strain DSM 244 / SL1)) protein is dCTP deaminase.